The following is a 720-amino-acid chain: DNA ligase (720 aa).

Residues 57-61 (DAEYD), 106-107 (SL), and Glu140 each bind NAD(+). The N6-AMP-lysine intermediate role is filled by Lys142. Residues Arg163, Glu200, Lys316, and Lys340 each contribute to the NAD(+) site. Residues Cys434, Cys437, Cys458, and Cys464 each coordinate Zn(2+). Residues 643–720 (AAASPVSGKT…TEDEWFELVG (78 aa)) form the BRCT domain.

It belongs to the NAD-dependent DNA ligase family. LigA subfamily. Mg(2+) is required as a cofactor. Mn(2+) serves as cofactor.

The enzyme catalyses NAD(+) + (deoxyribonucleotide)n-3'-hydroxyl + 5'-phospho-(deoxyribonucleotide)m = (deoxyribonucleotide)n+m + AMP + beta-nicotinamide D-nucleotide.. DNA ligase that catalyzes the formation of phosphodiester linkages between 5'-phosphoryl and 3'-hydroxyl groups in double-stranded DNA using NAD as a coenzyme and as the energy source for the reaction. It is essential for DNA replication and repair of damaged DNA. In Xanthobacter autotrophicus (strain ATCC BAA-1158 / Py2), this protein is DNA ligase.